We begin with the raw amino-acid sequence, 413 residues long: Serine--tRNA ligase (413 aa).

221 to 223 (TAE) provides a ligand contact to L-serine. An ATP-binding site is contributed by 252–254 (RRE). E275 contacts L-serine. An ATP-binding site is contributed by 339 to 342 (EVSS). S375 provides a ligand contact to L-serine.

This sequence belongs to the class-II aminoacyl-tRNA synthetase family. Type-1 seryl-tRNA synthetase subfamily. As to quaternary structure, homodimer. The tRNA molecule binds across the dimer.

The protein localises to the cytoplasm. The enzyme catalyses tRNA(Ser) + L-serine + ATP = L-seryl-tRNA(Ser) + AMP + diphosphate + H(+). It catalyses the reaction tRNA(Sec) + L-serine + ATP = L-seryl-tRNA(Sec) + AMP + diphosphate + H(+). It functions in the pathway aminoacyl-tRNA biosynthesis; selenocysteinyl-tRNA(Sec) biosynthesis; L-seryl-tRNA(Sec) from L-serine and tRNA(Sec): step 1/1. Its function is as follows. Catalyzes the attachment of serine to tRNA(Ser). Is also able to aminoacylate tRNA(Sec) with serine, to form the misacylated tRNA L-seryl-tRNA(Sec), which will be further converted into selenocysteinyl-tRNA(Sec). This is Serine--tRNA ligase from Dehalococcoides mccartyi (strain ATCC BAA-2266 / KCTC 15142 / 195) (Dehalococcoides ethenogenes (strain 195)).